The sequence spans 155 residues: Small ribosomal subunit protein uS7c (155 aa).

This sequence belongs to the universal ribosomal protein uS7 family. Part of the 30S ribosomal subunit.

It localises to the plastid. The protein resides in the chloroplast. One of the primary rRNA binding proteins, it binds directly to 16S rRNA where it nucleates assembly of the head domain of the 30S subunit. The chain is Small ribosomal subunit protein uS7c (rps7) from Pinus koraiensis (Korean pine).